The primary structure comprises 439 residues: MGFAVVRTNREFVRPSAATPPSSGELLELSIIDRVVGLRHLVRSLHIFSAAAPSGGDAKPSPARVIKEALGKALVDYYPFAGRFVDGGGGPGSARVECTGEGAWFVEAAAGCSLDDVNGLDHPLMIPEDDLLPDAAPGVHPLDLPLMMQVTEFSCGGFVVGLISVHTMADGLGAGQFINAVGDYARGLDRPRVSPVWAREAIPSPPKLPPGPPPELKMFQLRHVTADLSLDSINKAKSAYFAATGHRCSTFDVAIAKTWQARTRALRLPEPTSRVNLCFFANTRHLMAGAAAWPAPAAGGNGGNGFYGNCFYPVSVVAESGAVEAADVAGVVGMIREAKARLPADFARWAVADFREDPYELSFTYDSLFVSDWTRLGFLEADYGWGPPSHVIPFAYYPFMAVAIIGAPPVPKTGARIMTQCVEDDHLPAFKEEIKAFDK.

Catalysis depends on proton acceptor residues His-166 and Asp-382.

This sequence belongs to the plant acyltransferase family.

Grass-specific monolignol p-coumaroyl transferase involved in the biosynthesis of acylated monolignols or monolignol conjugates that serve as monomer precursors of lignin. Can synthesize sinapyl p-coumarate, p-coumaryl p-coumarate, sinapyl caffeate and p-coumaryl caffeate in vitro. This Oryza sativa subsp. japonica (Rice) protein is Acyl transferase 4.